A 462-amino-acid polypeptide reads, in one-letter code: L-seryl-tRNA(Sec) selenium transferase (462 aa).

Lys292 is subject to N6-(pyridoxal phosphate)lysine.

It belongs to the SelA family. Requires pyridoxal 5'-phosphate as cofactor.

Its subcellular location is the cytoplasm. The catalysed reaction is L-seryl-tRNA(Sec) + selenophosphate + H(+) = L-selenocysteinyl-tRNA(Sec) + phosphate. It functions in the pathway aminoacyl-tRNA biosynthesis; selenocysteinyl-tRNA(Sec) biosynthesis; selenocysteinyl-tRNA(Sec) from L-seryl-tRNA(Sec) (bacterial route): step 1/1. Functionally, converts seryl-tRNA(Sec) to selenocysteinyl-tRNA(Sec) required for selenoprotein biosynthesis. The chain is L-seryl-tRNA(Sec) selenium transferase from Geotalea uraniireducens (strain Rf4) (Geobacter uraniireducens).